Reading from the N-terminus, the 274-residue chain is 2,3,4,5-tetrahydropyridine-2,6-dicarboxylate N-succinyltransferase (274 aa).

Belongs to the transferase hexapeptide repeat family.

The protein localises to the cytoplasm. The catalysed reaction is (S)-2,3,4,5-tetrahydrodipicolinate + succinyl-CoA + H2O = (S)-2-succinylamino-6-oxoheptanedioate + CoA. It functions in the pathway amino-acid biosynthesis; L-lysine biosynthesis via DAP pathway; LL-2,6-diaminopimelate from (S)-tetrahydrodipicolinate (succinylase route): step 1/3. The polypeptide is 2,3,4,5-tetrahydropyridine-2,6-dicarboxylate N-succinyltransferase (Yersinia pseudotuberculosis serotype IB (strain PB1/+)).